Reading from the N-terminus, the 177-residue chain is Secretion monitor (177 aa).

A signal peptide spans 1-30 (MIGILNRWRQFGRRYFWPHLLLGMVAASLG).

This sequence belongs to the SecM family.

It localises to the cytoplasm. Its subcellular location is the cytosol. The protein localises to the periplasm. Its function is as follows. Regulates secA expression by translational coupling of the secM secA operon. Translational pausing at a specific Pro residue 5 residues before the end of the protein may allow disruption of a mRNA repressor helix that normally suppresses secA translation initiation. This is Secretion monitor from Yersinia enterocolitica serotype O:8 / biotype 1B (strain NCTC 13174 / 8081).